An 87-amino-acid polypeptide reads, in one-letter code: Potassium channel toxin Tdi-beta-KTx (87 aa).

Positions 1–19 (MERKLALLLLLGMITLASS) are cleaved as a signal peptide. Positions 20–27 (GLREKHVQ) are excised as a propeptide. In terms of domain architecture, BetaSPN-type CS-alpha/beta spans 53 to 87 (QFGCPAYEGYCMNHCQDIERHDGSCHGFKCKCEKS). Disulfide bonds link Cys56/Cys77, Cys63/Cys82, and Cys67/Cys84.

As to expression, expressed by the venom gland.

The protein localises to the secreted. In terms of biological role, inhibits voltage-gated potassium channel. This is Potassium channel toxin Tdi-beta-KTx from Tityus discrepans (Venezuelan scorpion).